Reading from the N-terminus, the 399-residue chain is Dihydrolipoyllysine-residue succinyltransferase component of 2-oxoglutarate dehydrogenase complex (399 aa).

Residues 2–77 enclose the Lipoyl-binding domain; it reads AIDIKAPTFP…LSGELLGKLT (76 aa). Lys43 is subject to N6-lipoyllysine. The Peripheral subunit-binding (PSBD) domain occupies 104–141; sequence ILSPAARKIAEENAIAADSITGTGKGGRVTKEDAVAAA. Active-site residues include His370 and Asp374.

This sequence belongs to the 2-oxoacid dehydrogenase family. As to quaternary structure, forms a 24-polypeptide structural core with octahedral symmetry. Part of the 2-oxoglutarate dehydrogenase (OGDH) complex composed of E1 (2-oxoglutarate dehydrogenase), E2 (dihydrolipoamide succinyltransferase) and E3 (dihydrolipoamide dehydrogenase); the complex contains multiple copies of the three enzymatic components (E1, E2 and E3). (R)-lipoate is required as a cofactor.

It carries out the reaction N(6)-[(R)-dihydrolipoyl]-L-lysyl-[protein] + succinyl-CoA = N(6)-[(R)-S(8)-succinyldihydrolipoyl]-L-lysyl-[protein] + CoA. It functions in the pathway amino-acid degradation; L-lysine degradation via saccharopine pathway; glutaryl-CoA from L-lysine: step 6/6. E2 component of the 2-oxoglutarate dehydrogenase (OGDH) complex which catalyzes the second step in the conversion of 2-oxoglutarate to succinyl-CoA and CO(2). This chain is Dihydrolipoyllysine-residue succinyltransferase component of 2-oxoglutarate dehydrogenase complex (sucB), found in Azotobacter vinelandii.